We begin with the raw amino-acid sequence, 359 residues long: Peptide chain release factor 1 (359 aa).

The residue at position 238 (Q238) is an N5-methylglutamine.

This sequence belongs to the prokaryotic/mitochondrial release factor family. In terms of processing, methylated by PrmC. Methylation increases the termination efficiency of RF1.

The protein resides in the cytoplasm. Functionally, peptide chain release factor 1 directs the termination of translation in response to the peptide chain termination codons UAG and UAA. The sequence is that of Peptide chain release factor 1 from Rhodococcus jostii (strain RHA1).